We begin with the raw amino-acid sequence, 180 residues long: ATP-dependent protease subunit HslV (180 aa).

The active site involves T7. Na(+) contacts are provided by G165, C168, and T171.

The protein belongs to the peptidase T1B family. HslV subfamily. A double ring-shaped homohexamer of HslV is capped on each side by a ring-shaped HslU homohexamer. The assembly of the HslU/HslV complex is dependent on binding of ATP.

It is found in the cytoplasm. The catalysed reaction is ATP-dependent cleavage of peptide bonds with broad specificity.. With respect to regulation, allosterically activated by HslU binding. Protease subunit of a proteasome-like degradation complex believed to be a general protein degrading machinery. In Bacillus cereus (strain ATCC 10987 / NRS 248), this protein is ATP-dependent protease subunit HslV.